A 542-amino-acid chain; its full sequence is MAKDIKFSEDARRAMLRGVDQLANAVKVTLGPKGRNVVLEKKFGSPLITNDGVTIAKEIELEDPFENMGAKLVSEVASKTNDVAGDGTTTATVLAQAMIQEGLKNVTAGANPVGVRRGIEKAVATAIEELKAISKPIESKESIAQVAAISSGDEEVGKLIAEAMERVGNDGVITIEESKGFATELDVVEGMQFDRGYTSPYMVTDSDKMEAVLEKPYILITDKKINNIQEILPVLEQVVQQGRPMLIIAEDVEGEAQATLVLNKLRGTFNVVAVKAPGFGDRRKAMLEDIAVLTGGQVITEDLGLELKTATVDQLGTANKVVVTKDDTTIVEGAGDSTQISARVNQIRAQMEETTSEFDREKLQERLAKLAGGVAVVKVGAATETELKERKLRIEDALNSTRAAVEEGIVAGGGTALVSIYNKVAALEAEGDVETGINIVLRSLEEPVRQIAHNAGLEGSVIVERLKHEAVGVGFNAANGEWINMIDAGIVDPTKVTRSALQNASSVAALLLTTEAVVADKPDENGPAAVPDMGMGGMGGMM.

Residues 29–32, 86–90, Gly413, 476–478, and Asp492 each bind ATP; these read TLGP, DGTTT, and NAA. The disordered stretch occupies residues 522-542; it reads PDENGPAAVPDMGMGGMGGMM.

It belongs to the chaperonin (HSP60) family. In terms of assembly, forms a cylinder of 14 subunits composed of two heptameric rings stacked back-to-back. Interacts with the co-chaperonin GroES.

It is found in the cytoplasm. The catalysed reaction is ATP + H2O + a folded polypeptide = ADP + phosphate + an unfolded polypeptide.. Functionally, together with its co-chaperonin GroES, plays an essential role in assisting protein folding. The GroEL-GroES system forms a nano-cage that allows encapsulation of the non-native substrate proteins and provides a physical environment optimized to promote and accelerate protein folding. The protein is Chaperonin GroEL of Listeria monocytogenes serotype 4a (strain HCC23).